A 555-amino-acid polypeptide reads, in one-letter code: Urocanate hydratase (555 aa).

NAD(+)-binding positions include 52 to 53, Gln-130, 176 to 178, Glu-196, Arg-201, 242 to 243, 263 to 267, 273 to 274, and Tyr-322; these read GG, GMG, NA, QTSAH, and YL. Cys-410 is an active-site residue. Gly-492 contacts NAD(+).

This sequence belongs to the urocanase family. Requires NAD(+) as cofactor.

The protein localises to the cytoplasm. The enzyme catalyses 4-imidazolone-5-propanoate = trans-urocanate + H2O. The protein operates within amino-acid degradation; L-histidine degradation into L-glutamate; N-formimidoyl-L-glutamate from L-histidine: step 2/3. Catalyzes the conversion of urocanate to 4-imidazolone-5-propionate. The sequence is that of Urocanate hydratase from Shewanella putrefaciens (strain CN-32 / ATCC BAA-453).